The following is a 126-amino-acid chain: NADH-quinone oxidoreductase subunit A (126 aa).

Transmembrane regions (helical) follow at residues 11 to 31 (IAIQLMVTLGFISVTLLSSWL), 64 to 84 (FLVATLFVLFDVEVIFFYPWA), and 98 to 118 (EGFVKMLLFMTSLLIGFIYVI).

The protein belongs to the complex I subunit 3 family. NDH-1 is composed of 14 different subunits. Subunits NuoA, H, J, K, L, M, N constitute the membrane sector of the complex.

It is found in the cell inner membrane. The catalysed reaction is a quinone + NADH + 5 H(+)(in) = a quinol + NAD(+) + 4 H(+)(out). Functionally, NDH-1 shuttles electrons from NADH, via FMN and iron-sulfur (Fe-S) centers, to quinones in the respiratory chain. The immediate electron acceptor for the enzyme in this species is believed to be a menaquinone. Couples the redox reaction to proton translocation (for every two electrons transferred, four hydrogen ions are translocated across the cytoplasmic membrane), and thus conserves the redox energy in a proton gradient. The polypeptide is NADH-quinone oxidoreductase subunit A (Cytophaga hutchinsonii (strain ATCC 33406 / DSM 1761 / CIP 103989 / NBRC 15051 / NCIMB 9469 / D465)).